Consider the following 429-residue polypeptide: Gamma-glutamyl phosphate reductase (429 aa).

It belongs to the gamma-glutamyl phosphate reductase family.

It is found in the cytoplasm. It catalyses the reaction L-glutamate 5-semialdehyde + phosphate + NADP(+) = L-glutamyl 5-phosphate + NADPH + H(+). It functions in the pathway amino-acid biosynthesis; L-proline biosynthesis; L-glutamate 5-semialdehyde from L-glutamate: step 2/2. In terms of biological role, catalyzes the NADPH-dependent reduction of L-glutamate 5-phosphate into L-glutamate 5-semialdehyde and phosphate. The product spontaneously undergoes cyclization to form 1-pyrroline-5-carboxylate. This Methylocella silvestris (strain DSM 15510 / CIP 108128 / LMG 27833 / NCIMB 13906 / BL2) protein is Gamma-glutamyl phosphate reductase.